A 553-amino-acid chain; its full sequence is Formate--tetrahydrofolate ligase (553 aa).

62-69 (TPAGEGKS) contributes to the ATP binding site.

This sequence belongs to the formate--tetrahydrofolate ligase family.

It carries out the reaction (6S)-5,6,7,8-tetrahydrofolate + formate + ATP = (6R)-10-formyltetrahydrofolate + ADP + phosphate. It functions in the pathway one-carbon metabolism; tetrahydrofolate interconversion. The chain is Formate--tetrahydrofolate ligase from Pediococcus pentosaceus (strain ATCC 25745 / CCUG 21536 / LMG 10740 / 183-1w).